The chain runs to 318 residues: Small ribosomal subunit biogenesis GTPase RsgA (318 aa).

A compositionally biased stretch (basic residues) spans 1 to 16 (MTRGKPGRAGHDRRHA). The interval 1–21 (MTRGKPGRAGHDRRHASTGEH) is disordered. Residues 84-249 (SDQFKSKQLA…LIDSPGFQEF (166 aa)) form the CP-type G domain. Residues 133–136 (NKID) and 187–195 (GQSGMGKSS) each bind GTP. Residues cysteine 273, cysteine 278, histidine 280, and cysteine 286 each contribute to the Zn(2+) site.

It belongs to the TRAFAC class YlqF/YawG GTPase family. RsgA subfamily. In terms of assembly, monomer. Associates with 30S ribosomal subunit, binds 16S rRNA. Zn(2+) serves as cofactor.

The protein resides in the cytoplasm. One of several proteins that assist in the late maturation steps of the functional core of the 30S ribosomal subunit. Helps release RbfA from mature subunits. May play a role in the assembly of ribosomal proteins into the subunit. Circularly permuted GTPase that catalyzes slow GTP hydrolysis, GTPase activity is stimulated by the 30S ribosomal subunit. The sequence is that of Small ribosomal subunit biogenesis GTPase RsgA from Ralstonia nicotianae (strain ATCC BAA-1114 / GMI1000) (Ralstonia solanacearum).